The chain runs to 564 residues: Septation ring formation regulator EzrA (564 aa).

Topologically, residues 1–4 (MVLY) are extracellular. A helical membrane pass occupies residues 5–23 (IILAIIVIILIAVGVLFYL). Residues 24-564 (RSNKRQIIEK…KHIEEEVIKQ (541 aa)) are Cytoplasmic-facing. 5 coiled-coil regions span residues 99–138 (SFNASQSEIDDANELMDSYEQSYQQQLEDVNEIIALYKDN), 190–223 (DGNYVQAHNHIAALNEQMKQLRSYMEEIPELIRE), 271–300 (LISRLELEEANDKLANINDKLDDMYDLIEH), 350–435 (VRQF…RRLL), and 471–550 (VKQL…ESVE).

The protein belongs to the EzrA family.

The protein resides in the cell membrane. Functionally, negative regulator of FtsZ ring formation; modulates the frequency and position of FtsZ ring formation. Inhibits FtsZ ring formation at polar sites. Interacts either with FtsZ or with one of its binding partners to promote depolymerization. The sequence is that of Septation ring formation regulator EzrA from Staphylococcus aureus (strain NCTC 8325 / PS 47).